A 369-amino-acid chain; its full sequence is Glutamate 5-kinase (369 aa).

Position 8 (Lys-8) interacts with ATP. The substrate site is built by Ser-49, Asp-136, and Asn-148. ATP contacts are provided by residues 168-169 and 212-218; these read TD and TGGMMTK. The region spanning 277–355 is the PUA domain; it reads TGKLYLDSGA…KEISTILGYV (79 aa).

It belongs to the glutamate 5-kinase family.

Its subcellular location is the cytoplasm. It carries out the reaction L-glutamate + ATP = L-glutamyl 5-phosphate + ADP. It participates in amino-acid biosynthesis; L-proline biosynthesis; L-glutamate 5-semialdehyde from L-glutamate: step 1/2. In terms of biological role, catalyzes the transfer of a phosphate group to glutamate to form L-glutamate 5-phosphate. This is Glutamate 5-kinase from Trichormus variabilis (strain ATCC 29413 / PCC 7937) (Anabaena variabilis).